We begin with the raw amino-acid sequence, 412 residues long: NAD-dependent dihydropyrimidine dehydrogenase subunit PreT (412 aa).

Glu-286 contacts NAD(+).

It belongs to the NADH dehydrogenase family. Heterotetramer of 2 PreA and 2 PreT subunits.

It catalyses the reaction 5,6-dihydrouracil + NAD(+) = uracil + NADH + H(+). It carries out the reaction 5,6-dihydrothymine + NAD(+) = thymine + NADH + H(+). Its function is as follows. Involved in pyrimidine base degradation. Catalyzes physiologically the reduction of uracil to 5,6-dihydrouracil (DHU) by using NADH as a specific cosubstrate. It also catalyzes the reverse reaction and the reduction of thymine to 5,6-dihydrothymine (DHT). The chain is NAD-dependent dihydropyrimidine dehydrogenase subunit PreT (preT) from Escherichia coli (strain K12).